Here is an 864-residue protein sequence, read N- to C-terminus: Structure-specific endonuclease subunit SLX4 (864 aa).

Disordered stretches follow at residues 1-21 (MTTQSSSDGRMFTSSIIPVIP), 49-69 (LSTSTSRGPTRSDTVGDKTQG), 91-113 (TGTGGKAATGKRLKRRTESPGNA), 161-190 (ANQTVSRQPETKISAPKECNDTTQPAGNDH), 289-318 (LSDDRQSSITEDSESATSKPRRVKAKNRPK), 346-385 (TLLSDEPGKEKSAAKRTSGARCAKPGRKKSTTTEKKNEPP), 413-433 (ANGHSEDQHEQNEGTSHISNS), and 625-767 (KAPN…VTSS). Polar residues predominate over residues 295 to 306 (SSITEDSESATS). The segment covering 307–318 (KPRRVKAKNRPK) has biased composition (basic residues). The span at 656–668 (QPNSISQKATTQV) shows a compositional bias: polar residues. Over residues 685–695 (VSSRRSTSTSK) the composition is skewed to low complexity. The span at 743–767 (PESFNLPTTPLTIRSGKVPSTVTSS) shows a compositional bias: polar residues.

This sequence belongs to the SLX4 family. As to quaternary structure, forms a heterodimer with SLX1. Phosphorylated in response to DNA damage.

Its subcellular location is the nucleus. Functionally, regulatory subunit of the SLX1-SLX4 structure-specific endonuclease that resolves DNA secondary structures generated during DNA repair and recombination. Has endonuclease activity towards branched DNA substrates, introducing single-strand cuts in duplex DNA close to junctions with ss-DNA. The sequence is that of Structure-specific endonuclease subunit SLX4 from Paracoccidioides lutzii (strain ATCC MYA-826 / Pb01) (Paracoccidioides brasiliensis).